We begin with the raw amino-acid sequence, 856 residues long: DNA mismatch repair protein MutS (856 aa).

607 to 614 (GPNMSGKS) lines the ATP pocket.

This sequence belongs to the DNA mismatch repair MutS family.

Functionally, this protein is involved in the repair of mismatches in DNA. It is possible that it carries out the mismatch recognition step. This protein has a weak ATPase activity. The chain is DNA mismatch repair protein MutS from Lactobacillus delbrueckii subsp. bulgaricus (strain ATCC 11842 / DSM 20081 / BCRC 10696 / JCM 1002 / NBRC 13953 / NCIMB 11778 / NCTC 12712 / WDCM 00102 / Lb 14).